Reading from the N-terminus, the 691-residue chain is Solute carrier family 28 member 3 (691 aa).

Residues 1–78 (MELRSTAAPR…HMEDDDEEMQ (78 aa)) are disordered. Residues 1–102 (MELRSTAAPR…FCRKHKTTLR (102 aa)) are Cytoplasmic-facing. A compositionally biased stretch (low complexity) spans 21 to 30 (NEENFLENEN). The segment covering 31–42 (TSGNNSIRSRAV) has biased composition (polar residues). Over residues 43–54 (QSREHTNTKQDE) the composition is skewed to basic and acidic residues. Residues 103 to 123 (HIIWGILLAGYLVMVISACVL) traverse the membrane as a helical segment. Topologically, residues 124–128 (NFHRA) are extracellular. A helical transmembrane segment spans residues 129 to 149 (LPLFVITVAAIFFVVWDHLMA). Topologically, residues 150 to 173 (KYEHRIDEMLSPGRRLLNSHWFWL) are cytoplasmic. A helical transmembrane segment spans residues 174–194 (KWVIWSSLVLAVIFWLAFDTA). Over 195–197 (KLG) the chain is Extracellular. A helical transmembrane segment spans residues 198 to 219 (QQQLVSFGGLIMYIVLLFLFSK). Residues 220–227 (YPTRVYWR) are Cytoplasmic-facing. The chain crosses the membrane as a helical span at residues 228 to 247 (PVLWGIGLQFLLGLLILRTD). Topologically, residues 248–284 (PGFIAFDWLGRQVQTFLEYTDAGASFVFGEKYKDHFF) are extracellular. A helical transmembrane segment spans residues 285–305 (AFKVLPIVVFFSTVMSMLYYL). Over 306–329 (GLMQWIIRKVGWIMLVTTGSSPIE) the chain is Cytoplasmic. The helical intramembrane region spans 330–348 (SVVASGNIFVGQTESPLLV). Residues 349–361 (RPYLPYITKSELH) are Cytoplasmic-facing. The helical transmembrane segment at 362–384 (AIMTAGFSTIAGSVLGAYISFGV) threads the bilayer. Residues 385 to 386 (PS) lie on the Extracellular side of the membrane. Residues 387 to 408 (SHLLTASVMSAPASLAAAKLFW) traverse the membrane as a helical segment. Topologically, residues 409–443 (PETEKPKITLKNAMKMESGDSGNLLEAATQGASSS) are cytoplasmic. A helical transmembrane segment spans residues 444–469 (ISLVANIAVNLIAFLALLSFMNSALS). Residues 470-507 (WFGNMFDYPQLSFELICSYIFMPFSFMMGVEWQDSFMV) are Extracellular-facing. Positions 508 to 527 (ARLIGYKTFFNEFVAYEHLS) form an intramembrane region, helical. The Extracellular portion of the chain corresponds to 528–566 (KWIHLRKEGGPKFVNGVQQYISIRSEIIATYALCGFANI). The helical transmembrane segment at 567–577 (GSLGIVIGGLT) threads the bilayer. Residues 578-590 (SMAPSRKRDIASG) are Cytoplasmic-facing. Residues 591 to 613 (AVRALIAGTVACFMTACIAGILS) traverse the membrane as a helical segment. Over 614 to 691 (STPVDINCHH…FNCNGISNTF (78 aa)) the chain is Extracellular.

This sequence belongs to the concentrative nucleoside transporter (CNT) (TC 2.A.41) family. In terms of assembly, homotrimer. In terms of tissue distribution, expressed in pancreas, bone marrow, trachea, mammary gland, liver, prostate, and regions of intestine, brain, lung, placenta, testis, kidney, and heart.

The protein localises to the cell membrane. It is found in the endoplasmic reticulum membrane. The catalysed reaction is thymidine(out) + 2 Na(+)(out) = thymidine(in) + 2 Na(+)(in). It carries out the reaction cytidine(out) + 2 Na(+)(out) = cytidine(in) + 2 Na(+)(in). The enzyme catalyses uridine(out) + 2 Na(+)(out) = uridine(in) + 2 Na(+)(in). It catalyses the reaction adenosine(out) + 2 Na(+)(out) = adenosine(in) + 2 Na(+)(in). The catalysed reaction is guanosine(out) + 2 Na(+)(out) = guanosine(in) + 2 Na(+)(in). It carries out the reaction inosine(out) + 2 Na(+)(out) = inosine(in) + 2 Na(+)(in). Its function is as follows. Sodium-dependent, pyrimidine- and purine-selective. Involved in the homeostasis of endogenous nucleosides. Exhibits the transport characteristics of the nucleoside transport system cib or N3 subtype (N3/cib) (with marked transport of both thymidine and inosine). Employs a 2:1 sodium/nucleoside ratio. Transports uridine. Also able to transport gemcitabine, 3'-azido-3'-deoxythymidine (AZT), ribavirin and 3-deazauridine. The polypeptide is Solute carrier family 28 member 3 (SLC28A3) (Homo sapiens (Human)).